The sequence spans 338 residues: Probable beta-1,4-xylosyltransferase IRX9 (338 aa).

Residues M1 to S21 form a disordered region. At M1–R27 the chain is on the cytoplasmic side. Residues A28–A46 traverse the membrane as a helical; Signal-anchor for type II membrane protein segment. Topologically, residues P47–L338 are lumenal. N-linked (GlcNAc...) asparagine glycans are attached at residues N232 and N314.

This sequence belongs to the glycosyltransferase 43 family.

The protein resides in the golgi apparatus membrane. Functionally, probable beta-1,4-xylosyltransferase involved in xylan biosynthesis in cell walls. The sequence is that of Probable beta-1,4-xylosyltransferase IRX9 from Oryza sativa subsp. japonica (Rice).